Here is a 394-residue protein sequence, read N- to C-terminus: 4-hydroxyphenylpyruvate dioxygenase (394 aa).

2 VOC domains span residues 18 to 149 (SFHH…LLEY) and 181 to 339 (FIDH…IFTK). Fe cation is bound by residues H184, H267, and E350.

This sequence belongs to the 4HPPD family. As to quaternary structure, homodimer. Fe cation is required as a cofactor.

Its subcellular location is the cytoplasm. It is found in the endoplasmic reticulum membrane. The protein localises to the golgi apparatus membrane. The catalysed reaction is 3-(4-hydroxyphenyl)pyruvate + O2 = homogentisate + CO2. It functions in the pathway amino-acid degradation; L-phenylalanine degradation; acetoacetate and fumarate from L-phenylalanine: step 3/6. Its function is as follows. Catalyzes the conversion of 4-hydroxyphenylpyruvic acid to homogentisic acid, one of the steps in tyrosine catabolism. The chain is 4-hydroxyphenylpyruvate dioxygenase (hpd) from Xenopus tropicalis (Western clawed frog).